The primary structure comprises 415 residues: Gamma-glutamyl phosphate reductase (415 aa).

This sequence belongs to the gamma-glutamyl phosphate reductase family.

It is found in the cytoplasm. It carries out the reaction L-glutamate 5-semialdehyde + phosphate + NADP(+) = L-glutamyl 5-phosphate + NADPH + H(+). It participates in amino-acid biosynthesis; L-proline biosynthesis; L-glutamate 5-semialdehyde from L-glutamate: step 2/2. Functionally, catalyzes the NADPH-dependent reduction of L-glutamate 5-phosphate into L-glutamate 5-semialdehyde and phosphate. The product spontaneously undergoes cyclization to form 1-pyrroline-5-carboxylate. The chain is Gamma-glutamyl phosphate reductase from Bacillus thuringiensis subsp. konkukian (strain 97-27).